The sequence spans 413 residues: Porin PorA (413 aa).

Positions Met-1–Ala-22 are cleaved as a signal peptide. The segment at Thr-265–Glu-288 is disordered.

This sequence belongs to the PorA family.

It is found in the secreted. It localises to the cell wall. In terms of biological role, forms water-filled channels that favor the permeation of cations. The polypeptide is Porin PorA (Corynebacterium resistens (strain DSM 45100 / JCM 12819 / GTC 2026 / SICGH 158)).